Reading from the N-terminus, the 336-residue chain is Dihydroorotate dehydrogenase (quinone) (336 aa).

FMN is bound by residues 62–66 and T86; that span reads AGLDK. K66 is a substrate binding site. 111–115 lines the substrate pocket; it reads NRMGF. Residues N139 and N172 each contribute to the FMN site. Position 172 (N172) interacts with substrate. The active-site Nucleophile is S175. N177 lines the substrate pocket. FMN is bound by residues K217 and T245. Residue 246–247 participates in substrate binding; sequence NT. FMN contacts are provided by residues G268, G297, and 318–319; that span reads YS.

Belongs to the dihydroorotate dehydrogenase family. Type 2 subfamily. In terms of assembly, monomer. The cofactor is FMN.

It localises to the cell membrane. It carries out the reaction (S)-dihydroorotate + a quinone = orotate + a quinol. It functions in the pathway pyrimidine metabolism; UMP biosynthesis via de novo pathway; orotate from (S)-dihydroorotate (quinone route): step 1/1. Functionally, catalyzes the conversion of dihydroorotate to orotate with quinone as electron acceptor. In Escherichia coli O17:K52:H18 (strain UMN026 / ExPEC), this protein is Dihydroorotate dehydrogenase (quinone).